A 325-amino-acid chain; its full sequence is Elongation factor P--(R)-beta-lysine ligase (325 aa).

76 to 78 (SPE) contacts substrate. Residues 100-102 (RNE) and Asn-109 each bind ATP. Residue Tyr-118 participates in substrate binding. 244–245 (EL) contributes to the ATP binding site. Glu-251 provides a ligand contact to substrate. Gly-300 is a binding site for ATP.

The protein belongs to the class-II aminoacyl-tRNA synthetase family. EpmA subfamily. As to quaternary structure, homodimer.

The catalysed reaction is D-beta-lysine + L-lysyl-[protein] + ATP = N(6)-((3R)-3,6-diaminohexanoyl)-L-lysyl-[protein] + AMP + diphosphate + H(+). Functionally, with EpmB is involved in the beta-lysylation step of the post-translational modification of translation elongation factor P (EF-P). Catalyzes the ATP-dependent activation of (R)-beta-lysine produced by EpmB, forming a lysyl-adenylate, from which the beta-lysyl moiety is then transferred to the epsilon-amino group of a conserved specific lysine residue in EF-P. This chain is Elongation factor P--(R)-beta-lysine ligase, found in Pectobacterium atrosepticum (strain SCRI 1043 / ATCC BAA-672) (Erwinia carotovora subsp. atroseptica).